We begin with the raw amino-acid sequence, 122 residues long: Large ribosomal subunit protein uL14 (122 aa).

The protein belongs to the universal ribosomal protein uL14 family. Part of the 50S ribosomal subunit. Forms a cluster with proteins L3 and L19. In the 70S ribosome, L14 and L19 interact and together make contacts with the 16S rRNA in bridges B5 and B8.

In terms of biological role, binds to 23S rRNA. Forms part of two intersubunit bridges in the 70S ribosome. The sequence is that of Large ribosomal subunit protein uL14 from Leptothrix cholodnii (strain ATCC 51168 / LMG 8142 / SP-6) (Leptothrix discophora (strain SP-6)).